A 67-amino-acid polypeptide reads, in one-letter code: Small ribosomal subunit protein eS31 (67 aa).

Zn(2+)-binding residues include cysteine 31, cysteine 34, cysteine 49, and cysteine 52. Residues 31–52 (CPKCGAGVFMAEHLNRFACGKC) form a C4-type zinc finger.

This sequence belongs to the eukaryotic ribosomal protein eS31 family. In terms of assembly, part of the 30S ribosomal subunit. Requires Zn(2+) as cofactor.

The sequence is that of Small ribosomal subunit protein eS31 from Methanococcus maripaludis (strain C7 / ATCC BAA-1331).